Consider the following 146-residue polypeptide: Ribosome-binding factor A (146 aa).

The span at Gln122 to Asn134 shows a compositional bias: polar residues. Residues Gln122 to Ala146 form a disordered region. Positions Asp135–Ala146 are enriched in acidic residues.

The protein belongs to the RbfA family. As to quaternary structure, monomer. Binds 30S ribosomal subunits, but not 50S ribosomal subunits or 70S ribosomes.

It is found in the cytoplasm. Its function is as follows. One of several proteins that assist in the late maturation steps of the functional core of the 30S ribosomal subunit. Associates with free 30S ribosomal subunits (but not with 30S subunits that are part of 70S ribosomes or polysomes). Required for efficient processing of 16S rRNA. May interact with the 5'-terminal helix region of 16S rRNA. The chain is Ribosome-binding factor A from Shewanella sp. (strain ANA-3).